A 340-amino-acid polypeptide reads, in one-letter code: Tryptophan--tRNA ligase (340 aa).

ATP-binding positions include 11 to 13 (RPT) and 19 to 20 (GH). The 'HIGH' region signature appears at 12–20 (PTGKLHLGH). Aspartate 140 provides a ligand contact to L-tryptophan. ATP is bound by residues 152–154 (GND), leucine 194, and 202–206 (KMSKS). A 'KMSKS' region motif is present at residues 202 to 206 (KMSKS).

It belongs to the class-I aminoacyl-tRNA synthetase family. As to quaternary structure, homodimer.

Its subcellular location is the cytoplasm. It carries out the reaction tRNA(Trp) + L-tryptophan + ATP = L-tryptophyl-tRNA(Trp) + AMP + diphosphate + H(+). In terms of biological role, catalyzes the attachment of tryptophan to tRNA(Trp). This is Tryptophan--tRNA ligase from Streptococcus pyogenes serotype M1.